The primary structure comprises 187 residues: Inner membrane-spanning protein YciB (187 aa).

5 helical membrane passes run 22 to 42 (IYVA…VTYA), 50 to 70 (MQLI…FFHD), 80 to 100 (IIYV…KSVV), 118 to 138 (INWA…YIAY), and 148 to 168 (FKVF…GVYI).

This sequence belongs to the YciB family.

It is found in the cell inner membrane. In terms of biological role, plays a role in cell envelope biogenesis, maintenance of cell envelope integrity and membrane homeostasis. The sequence is that of Inner membrane-spanning protein YciB from Vibrio parahaemolyticus serotype O3:K6 (strain RIMD 2210633).